The sequence spans 183 residues: Oligoribonuclease (183 aa).

The 164-residue stretch at 9-172 (LIWIDLEMTG…DDIRESIEEL (164 aa)) folds into the Exonuclease domain. Residue Tyr130 is part of the active site.

It belongs to the oligoribonuclease family.

The protein localises to the cytoplasm. 3'-to-5' exoribonuclease specific for small oligoribonucleotides. In Haemophilus ducreyi (strain 35000HP / ATCC 700724), this protein is Oligoribonuclease.